The sequence spans 93 residues: Small ribosomal subunit protein uS19 (93 aa).

Belongs to the universal ribosomal protein uS19 family.

Its function is as follows. Protein S19 forms a complex with S13 that binds strongly to the 16S ribosomal RNA. This Leifsonia xyli subsp. xyli (strain CTCB07) protein is Small ribosomal subunit protein uS19.